The sequence spans 136 residues: MLKELNYLFLFQRLIKNGSLEIALTNIFSLGISRDYITINIENIKTLKEIMEAVSSKSANKKLKSFLEKIEDLKIFLSEASKIAEILVNNRKTFILKYKGKEVLIVGYDARGGIFLKNIKITDKLALIKMLNEFKN.

This is an uncharacterized protein from Methanocaldococcus jannaschii (strain ATCC 43067 / DSM 2661 / JAL-1 / JCM 10045 / NBRC 100440) (Methanococcus jannaschii).